Here is a 604-residue protein sequence, read N- to C-terminus: Solute carrier family 23 member 1 (604 aa).

Residues 1–29 are disordered; the sequence is MKAQEDPGSSKQHECPDSAGTSTRDQQAP. At 1-59 the chain is on the cytoplasmic side; that stretch reads MKAQEDPGSSKQHECPDSAGTSTRDQQAPLPAEPKFDMLYKIEDVPPWYLCILLGFQHY. The chain crosses the membrane as a helical span at residues 60–80; it reads LTCFSGTIAVPFLLAEALCVG. Over 81 to 88 the chain is Extracellular; it reads RDQHMISQ. Residues 89-109 traverse the membrane as a helical segment; it reads LIGTIFTCVGITTLIQTTVGI. A topological domain (cytoplasmic) is located at residue Arg-110. A helical membrane pass occupies residues 111–131; that stretch reads LPLFQASAFAFLVPAKAILAL. Residues 132-166 lie on the Extracellular side of the membrane; sequence ERWKCPPEEEIYGNWSMPLNTSHIWHPRIREVQGA. 2 N-linked (GlcNAc...) asparagine glycosylation sites follow: Asn-145 and Asn-151. A helical membrane pass occupies residues 167-187; sequence IMVSSVVEVVIGLLGLPGALL. The Cytoplasmic portion of the chain corresponds to 188-214; the sequence is SYIGPLTVTPTVSLIGLSVFQAAGDRA. A helical membrane pass occupies residues 215 to 232; that stretch reads GSHWGISACSILLIVLFS. At 233–236 the chain is on the extracellular side; sequence QYLR. Positions 237–250 form an intramembrane region, helical; it reads NLTFLLPVYRWGKG. The Extracellular portion of the chain corresponds to 251 to 257; that stretch reads LTLFRIQ. Residues 258-278 form a helical membrane-spanning segment; sequence IFKMFPIVLAIMTVWLLCYVL. The Cytoplasmic portion of the chain corresponds to 279–319; it reads TLTDVLPADPTVYGFQARTDARGDIMAISPWIRIPYPCQWG. The helical transmembrane segment at 320 to 340 threads the bilayer; it reads LPTVTVAAVLGMFSATLAGII. Residues 341 to 365 lie on the Extracellular side of the membrane; that stretch reads ESIGDYYACARLAGAPPPPVHAINR. The chain crosses the membrane as a helical span at residues 366 to 386; it reads GIFTEGVCCIIAGLLGTGNGS. The Cytoplasmic portion of the chain corresponds to 387-409; the sequence is TSSSPNIGVLGITKVGSRRVVQY. Residues 410–430 form a helical membrane-spanning segment; that stretch reads GAGIMLILGAIGKFTALFASL. Residues 431–433 lie on the Extracellular side of the membrane; that stretch reads PDP. The helical transmembrane segment at 434-454 threads the bilayer; the sequence is ILGGMFCTLFGMITAVGLSNL. The Cytoplasmic segment spans residues 455–464; that stretch reads QFVDMNSSRN. Residues 465–485 form a helical membrane-spanning segment; it reads LFVLGFSMFFGLTLPNYLDSN. The Extracellular portion of the chain corresponds to 486–497; sequence PGAINTGVPEVD. A helical transmembrane segment spans residues 498–518; that stretch reads QILTVLLTTEMFVGGCLAFIL. Topologically, residues 519-604 are cytoplasmic; the sequence is DNTVPGSPEE…TETGSVCTKV (86 aa). Thr-597 is modified (phosphothreonine). The residue at position 599 (Ser-599) is a Phosphoserine. A Phosphothreonine modification is found at Thr-602.

It belongs to the nucleobase:cation symporter-2 (NCS2) (TC 2.A.40) family. In terms of processing, phosphorylated. Highly expressed in the straight segment of proximal tubules in the kidney, in intestine and liver. Detected in epithelial cells of the bronchiole and epididymis.

It is found in the cell membrane. The enzyme catalyses L-ascorbate(out) + 2 Na(+)(out) = L-ascorbate(in) + 2 Na(+)(in). It carries out the reaction urate(out) + 2 Na(+)(out) = urate(in) + 2 Na(+)(in). Sodium/ascorbate cotransporter. Mediates electrogenic uptake of vitamin C, with a stoichiometry of 2 Na(+) for each ascorbate. Has retained some ancestral activity toward nucleobases such as urate, an oxidized purine. Low-affinity high-capacity sodium:urate cotransporter, may regulate serum urate levels by serving as a renal urate re-absorber. The sequence is that of Solute carrier family 23 member 1 (Slc23a1) from Rattus norvegicus (Rat).